The following is a 247-amino-acid chain: Mitochondrial inner membrane protease ATP23 (247 aa).

The interval 1–21 is disordered; the sequence is MSVPPPPKEDLIKPNPPKSES. Histidine 144 lines the a divalent metal cation pocket. Glutamate 145 is a catalytic residue. Position 148 (histidine 148) interacts with a divalent metal cation.

Belongs to the peptidase M76 family.

Its subcellular location is the mitochondrion inner membrane. Functionally, has a dual role in the assembly of mitochondrial ATPase. Acts as a protease that removes N-terminal residues of mitochondrial ATPase CF(0) subunit 6 at the intermembrane space side. Also involved in the correct assembly of the membrane-embedded ATPase CF(0) particle, probably mediating association of subunit 6 with the subunit 9 ring. This Kluyveromyces lactis (strain ATCC 8585 / CBS 2359 / DSM 70799 / NBRC 1267 / NRRL Y-1140 / WM37) (Yeast) protein is Mitochondrial inner membrane protease ATP23 (ATP23).